The chain runs to 245 residues: tRNA1(Val) (adenine(37)-N6)-methyltransferase (245 aa).

Belongs to the methyltransferase superfamily. tRNA (adenine-N(6)-)-methyltransferase family.

The protein resides in the cytoplasm. The enzyme catalyses adenosine(37) in tRNA1(Val) + S-adenosyl-L-methionine = N(6)-methyladenosine(37) in tRNA1(Val) + S-adenosyl-L-homocysteine + H(+). In terms of biological role, specifically methylates the adenine in position 37 of tRNA(1)(Val) (anticodon cmo5UAC). This chain is tRNA1(Val) (adenine(37)-N6)-methyltransferase, found in Salmonella arizonae (strain ATCC BAA-731 / CDC346-86 / RSK2980).